We begin with the raw amino-acid sequence, 32 residues long: Variegin (32 aa).

The segment at 1 to 32 is disordered; it reads SDQGDVAEPKMHKTAPPFDFEAIPEEYLDDES. A contains the active site region spans residues 8–14; that stretch reads EPKMHKT. Residue Thr14 is glycosylated (O-linked (Hex) threonine). Residues 22 to 32 show a composition bias toward acidic residues; that stretch reads AIPEEYLDDES.

As to quaternary structure, interacts with human F2 (thrombin); the interaction results in thrombin inhibition.

The protein resides in the secreted. In terms of biological role, thrombin inhibitor. Does not inhibit other serine proteases. In Amblyomma variegatum (Tropical bont tick), this protein is Variegin.